We begin with the raw amino-acid sequence, 140 residues long: Nucleoside diphosphate kinase (140 aa).

The ATP site is built by Lys-11, Phe-59, Arg-87, Thr-93, Arg-104, and Asn-114. His-117 functions as the Pros-phosphohistidine intermediate in the catalytic mechanism.

Belongs to the NDK family. As to quaternary structure, homotetramer. Requires Mg(2+) as cofactor.

Its subcellular location is the cytoplasm. It catalyses the reaction a 2'-deoxyribonucleoside 5'-diphosphate + ATP = a 2'-deoxyribonucleoside 5'-triphosphate + ADP. The enzyme catalyses a ribonucleoside 5'-diphosphate + ATP = a ribonucleoside 5'-triphosphate + ADP. Functionally, major role in the synthesis of nucleoside triphosphates other than ATP. The ATP gamma phosphate is transferred to the NDP beta phosphate via a ping-pong mechanism, using a phosphorylated active-site intermediate. This is Nucleoside diphosphate kinase from Acidiphilium cryptum (strain JF-5).